Consider the following 396-residue polypeptide: MQNMVILGATGSIGASTLSVISANPLAYSVYGLVANASVDKMLALCVAHKPKVAHMVDEAAAKQLRAVLPATLNIQVTTGMNDLLGLVTAAEVDTVMAAIVGAAGLVPTLEAVKAGKRVLLANKEALVMSGELFIEATKRSGAVLLPVDSEHNAIFQCLPQEVQANLGRCDLAASGISHILLTGSGGPFLRSDLATLAAMTPAQACKHPNWSMGPKISVDSATMMNKGLEFIEARWLFNTQAEQLKVVIHPQSVIHSMVQYRDGSVIAQMGNPDMRTPIAHCMAYPQRIHSGVEPLDFFKVGQLSFYEPDFERFPCLALAMDACAQGQEATTVLNAANEIAVEAFLQGQIGFTQIAKVNEACLVTVPKRPMGSIEDILALDAQTRVYARETLASIA.

NADPH is bound by residues Thr-10, Gly-11, Ser-12, Ile-13, and Asn-123. Lys-124 is a binding site for 1-deoxy-D-xylulose 5-phosphate. Glu-125 provides a ligand contact to NADPH. Asp-149 provides a ligand contact to Mn(2+). 1-deoxy-D-xylulose 5-phosphate-binding residues include Ser-150, Glu-151, Ser-185, and His-208. Glu-151 contacts Mn(2+). NADPH is bound at residue Gly-214. Ser-221, Asn-226, Lys-227, and Glu-230 together coordinate 1-deoxy-D-xylulose 5-phosphate. A Mn(2+)-binding site is contributed by Glu-230.

This sequence belongs to the DXR family. Requires Mg(2+) as cofactor. Mn(2+) serves as cofactor.

The catalysed reaction is 2-C-methyl-D-erythritol 4-phosphate + NADP(+) = 1-deoxy-D-xylulose 5-phosphate + NADPH + H(+). Its pathway is isoprenoid biosynthesis; isopentenyl diphosphate biosynthesis via DXP pathway; isopentenyl diphosphate from 1-deoxy-D-xylulose 5-phosphate: step 1/6. In terms of biological role, catalyzes the NADPH-dependent rearrangement and reduction of 1-deoxy-D-xylulose-5-phosphate (DXP) to 2-C-methyl-D-erythritol 4-phosphate (MEP). This Shewanella baltica (strain OS223) protein is 1-deoxy-D-xylulose 5-phosphate reductoisomerase.